Here is a 370-residue protein sequence, read N- to C-terminus: 5-hydroxytryptamine receptor 5B (370 aa).

The interval 1 to 36 (MEVSNLSGATPGIAFPPGPESCSDSPSSGRSMGSTP) is disordered. Over 1 to 48 (MEVSNLSGATPGIAFPPGPESCSDSPSSGRSMGSTPGGLILSGREPPF) the chain is Extracellular. N-linked (GlcNAc...) asparagine glycosylation is present at asparagine 5. The span at 20–36 (ESCSDSPSSGRSMGSTP) shows a compositional bias: low complexity. Residues 49–75 (SAFTVLVVTLLVLLIAATFLWNLLVLV) traverse the membrane as a helical segment. At 76 to 88 (TILRVRAFHRVPH) the chain is on the cytoplasmic side. The helical transmembrane segment at 89-115 (NLVASTAVSDVLVAALVMPLSLVSELS) threads the bilayer. At 116-127 (AGRRWQLGRSLC) the chain is on the extracellular side. A disulfide bridge connects residues cysteine 127 and cysteine 205. Residues 128 to 150 (HVWISFDVLCCTASIWNVAAIAL) traverse the membrane as a helical segment. A serotonin-binding site is contributed by aspartate 134. The Cytoplasmic portion of the chain corresponds to 151–168 (DRYWTITRHLQYTLRTRR). The chain crosses the membrane as a helical span at residues 169 to 189 (RASALMIAITWALSALIALAP). Over 190–211 (LLFGWGEAYDARLQRCQVSQEP) the chain is Extracellular. A helical membrane pass occupies residues 212-233 (SYAVFSTCGAFYVPLAVVLFVY). At 234-300 (WKIYKAAKFR…QKEKRAAMMV (67 aa)) the chain is on the cytoplasmic side. The helical transmembrane segment at 301-325 (GILIGVFVLCWIPFFLTELVSPLCA) threads the bilayer. Over 326–327 (CS) the chain is Extracellular. The helical transmembrane segment at 328 to 352 (LPPIWKSIFLWLGYSNSFFNPLIYT) threads the bilayer. Over 353 to 370 (AFNKNYNNAFKSLFTKQR) the chain is Cytoplasmic.

Belongs to the G-protein coupled receptor 1 family. Brain; in the CA1 region of hippocampus, the medial habenula, and raphe nuclei.

The protein localises to the cell membrane. Functionally, G-protein coupled receptor for 5-hydroxytryptamine (serotonin), a biogenic hormone that functions as a neurotransmitter, a hormone and a mitogen. Also functions as a receptor for ergot alkaloid derivatives and other psychoactive substances. Ligand binding causes a conformation change that triggers signaling via guanine nucleotide-binding proteins (G proteins) and modulates the activity of downstream effectors. Htr5b is coupled to G(i)/G(o) G alpha proteins and mediates inhibitory neurotransmission: signaling inhibits adenylate cyclase activity and activates a phosphatidylinositol-calcium second messenger system that regulates the release of Ca(2+) ions from intracellular stores. The polypeptide is 5-hydroxytryptamine receptor 5B (Rattus norvegicus (Rat)).